Reading from the N-terminus, the 255-residue chain is Capsid protein (255 aa).

Residues 1 to 25 (MVQKRKDLRRSDAGSAVRAKLHKAS) carry the Bipartite nuclear localization signal motif.

This sequence belongs to the geminiviridae capsid protein family. Homomultimer. Interacts with the movement protein. Binds to single-stranded and double-stranded viral DNA.

It localises to the virion. The protein localises to the host nucleus. Its function is as follows. Encapsidates the viral genome into characteristic twinned ('geminate') particles. Binds the genomic viral ssDNA and shuttles it into and out of the cell nucleus. Plays a role in protection of the genome from degradation, virus acquisition and transmission by insect vectors, infectivity, and systemic movement. The CP of monopartite geminiviruses is absolutely essential for virus movement. This chain is Capsid protein, found in Miscanthus streak virus (isolate 91) (MiSV).